A 236-amino-acid chain; its full sequence is Sensory rhodopsin I (236 aa).

Helical transmembrane passes span 6–26 (VVYG…GFLY), 37–57 (ILAA…AMVF), 74–94 (YLDW…TAGA), 98–118 (AIFG…GAVV), 126–146 (ALFG…YLIF), 167–187 (VGLL…GLGF), and 192–212 (GVSI…VYFF). Position 205 is an N6-(retinylidene)lysine (K205).

Belongs to the archaeal/bacterial/fungal opsin family. As to quaternary structure, interacts with Htr1. In terms of processing, the covalent binding of retinal to the apoprotein, bacterioopsin, generates bacteriorhodopsin.

Its subcellular location is the membrane. Photoattractant rhodopsin. This chain is Sensory rhodopsin I (sop1), found in Haloarcula marismortui (strain ATCC 43049 / DSM 3752 / JCM 8966 / VKM B-1809) (Halobacterium marismortui).